We begin with the raw amino-acid sequence, 105 residues long: Large ribosomal subunit protein uL24 (105 aa).

The protein belongs to the universal ribosomal protein uL24 family. In terms of assembly, part of the 50S ribosomal subunit.

One of two assembly initiator proteins, it binds directly to the 5'-end of the 23S rRNA, where it nucleates assembly of the 50S subunit. Its function is as follows. One of the proteins that surrounds the polypeptide exit tunnel on the outside of the subunit. The polypeptide is Large ribosomal subunit protein uL24 (Wolbachia pipientis wMel).